The primary structure comprises 524 residues: Cytochrome P450 monooxygenase patH (524 aa).

The Cytoplasmic portion of the chain corresponds to 1–4 (MEPF). A helical membrane pass occupies residues 5 to 22 (LLLLLVLLPAIVLVRYAF). The Lumenal portion of the chain corresponds to 23-524 (TYGHRTSTMP…ADVFSRFTEG (502 aa)). The N-linked (GlcNAc...) asparagine glycan is linked to N266. C442 lines the heme pocket.

Belongs to the cytochrome P450 family. The cofactor is heme.

Its subcellular location is the endoplasmic reticulum membrane. It carries out the reaction 3-methylphenol + reduced [NADPH--hemoprotein reductase] + O2 = 3-hydroxybenzyl alcohol + oxidized [NADPH--hemoprotein reductase] + H2O + H(+). It functions in the pathway mycotoxin biosynthesis; patulin biosynthesis. Functionally, cytochrome P450 monooxygenase; part of the gene cluster that mediates the biosynthesis of patulin, an acetate-derived tetraketide mycotoxin produced by several fungal species that shows antimicrobial properties against several bacteria. PatH catalyzes the conversion of m-cresol into m-hydroxybenzyl alcohol. The pathway begins with the synthesis of 6-methylsalicylic acid by the polyketide synthase (PKS) patK via condensation of acetate and malonate units. The 6-methylsalicylic acid decarboxylase patG then catalyzes the decarboxylation of 6-methylsalicylic acid to yield m-cresol (also known as 3-methylphenol). These first reactions occur in the cytosol. The intermediate m-cresol is then transported into the endoplasmic reticulum where the cytochrome P450 monooxygenase patH converts it to m-hydroxybenzyl alcohol, which is further converted to gentisyl alcohol by the cytochrome P450 monooxygenase patI. The oxidoreductases patJ and patO further convert gentisyl alcohol to isoepoxydon in the vacuole. PatN catalyzes then the transformation of isoepoxydon into phyllostine. The cluster protein patF is responsible for the conversion from phyllostine to neopatulin whereas the alcohol dehydrogenase patD converts neopatulin to E-ascladiol. The steps between isoepoxydon and E-ascladiol occur in the cytosol, and E-ascladiol is probably secreted to the extracellular space by one of the cluster-specific transporters patC or patM. Finally, the secreted patulin synthase patE catalyzes the conversion of E-ascladiol to patulin. The polypeptide is Cytochrome P450 monooxygenase patH (Penicillium expansum (Blue mold rot fungus)).